Consider the following 294-residue polypeptide: MKKSESLPVLIVTGLSGAGKSTVLNVFEDLRFFTIDGLPVGVVADLLEHLARDAMGRYRGVVLGMDLRQFDFLDEFEGALMRLEKMGVSPRIIYLEADSDTLVRRFATTRRPHPLEGGDLGLEAAVEHERNLLAPVRERADLILDTSEFSIHDLRRIVQKKWSSLGGSLRSLRVNLITFGFKYGVPSDADMVFDLRFLPNPYFDAKLKALSGKDPEIQQFVLGCEQGKTFFKRFLDFLLFLLPQYEAEGRYRITLAIGCTGGRHRSVSTAEALRDALKKSDYAVSLEHRHIDLG.

Gly14–Ser21 is a binding site for ATP. Asp66–Gln69 serves as a coordination point for GTP.

It belongs to the RapZ-like family.

Its function is as follows. Displays ATPase and GTPase activities. In Oleidesulfovibrio alaskensis (strain ATCC BAA-1058 / DSM 17464 / G20) (Desulfovibrio alaskensis), this protein is Nucleotide-binding protein Dde_1774.